Here is a 187-residue protein sequence, read N- to C-terminus: Macro domain-containing protein MM_0177 (187 aa).

Residues 8–187 (VEEGIRMELN…SIKKALSKIL (180 aa)) form the Macro domain.

The protein belongs to the MacroD-type family.

The sequence is that of Macro domain-containing protein MM_0177 from Methanosarcina mazei (strain ATCC BAA-159 / DSM 3647 / Goe1 / Go1 / JCM 11833 / OCM 88) (Methanosarcina frisia).